A 410-amino-acid polypeptide reads, in one-letter code: UBX domain-containing protein 3 (410 aa).

Disordered stretches follow at residues 46–139 and 154–212; these read EEDH…PDPK and TISP…EKPL. The span at 65 to 85 shows a compositional bias: low complexity; sequence GSSSGISGGDQQPPRPLQRQQ. Positions 86–97 are enriched in polar residues; the sequence is NTQGQGMKSGTA. Ser-156, Ser-167, and Ser-186 each carry phosphoserine. Over residues 163 to 174 the composition is skewed to low complexity; the sequence is SGPSSLASSWAS. The segment covering 183–196 has biased composition (polar residues); the sequence is NEASGSTTPVTQSG. Thr-190 carries the post-translational modification Phosphothreonine. Positions 211-276 constitute an SEP domain; that stretch reads PLRRTLYFWR…VQHRMDEDYV (66 aa). Positions 334–410 constitute a UBX domain; it reads ENKPTTRIQV…KNASLVQKSL (77 aa).

As to quaternary structure, interacts with cdc48.

Its function is as follows. Involved in CDC48-dependent protein degradation through the ubiquitin/proteasome pathway. Involved in delivery of substrates to the 26S proteasome. Also required for membrane fusion and sporulation. This chain is UBX domain-containing protein 3 (ubx3), found in Schizosaccharomyces pombe (strain 972 / ATCC 24843) (Fission yeast).